We begin with the raw amino-acid sequence, 162 residues long: Cyclic pyranopterin monophosphate synthase (162 aa).

Residues 75–77 and 113–114 contribute to the substrate site; these read LCH and ME. Asp-128 is an active-site residue.

This sequence belongs to the MoaC family. In terms of assembly, homohexamer; trimer of dimers.

It carries out the reaction (8S)-3',8-cyclo-7,8-dihydroguanosine 5'-triphosphate = cyclic pyranopterin phosphate + diphosphate. The protein operates within cofactor biosynthesis; molybdopterin biosynthesis. Its function is as follows. Catalyzes the conversion of (8S)-3',8-cyclo-7,8-dihydroguanosine 5'-triphosphate to cyclic pyranopterin monophosphate (cPMP). The chain is Cyclic pyranopterin monophosphate synthase from Burkholderia vietnamiensis (strain G4 / LMG 22486) (Burkholderia cepacia (strain R1808)).